Reading from the N-terminus, the 266-residue chain is Phosphonates import ATP-binding protein PhnC (266 aa).

In terms of domain architecture, ABC transporter spans 2-246; it reads IEIKNVSKTY…KFAEIYGRPI (245 aa). 35 to 42 provides a ligand contact to ATP; sequence GLSGAGKS.

The protein belongs to the ABC transporter superfamily. Phosphonates importer (TC 3.A.1.9.1) family. The complex is composed of two ATP-binding proteins (PhnC), two transmembrane proteins (PhnE) and a solute-binding protein (PhnD).

It localises to the cell membrane. The enzyme catalyses phosphonate(out) + ATP + H2O = phosphonate(in) + ADP + phosphate + H(+). Part of the ABC transporter complex PhnCDE involved in phosphonates import. Responsible for energy coupling to the transport system. In Shouchella clausii (strain KSM-K16) (Alkalihalobacillus clausii), this protein is Phosphonates import ATP-binding protein PhnC.